A 237-amino-acid polypeptide reads, in one-letter code: Ribonuclease PH (237 aa).

Phosphate-binding positions include Arg86 and 124–126; that span reads GTR.

This sequence belongs to the RNase PH family. In terms of assembly, homohexameric ring arranged as a trimer of dimers.

The catalysed reaction is tRNA(n+1) + phosphate = tRNA(n) + a ribonucleoside 5'-diphosphate. Its function is as follows. Phosphorolytic 3'-5' exoribonuclease that plays an important role in tRNA 3'-end maturation. Removes nucleotide residues following the 3'-CCA terminus of tRNAs; can also add nucleotides to the ends of RNA molecules by using nucleoside diphosphates as substrates, but this may not be physiologically important. Probably plays a role in initiation of 16S rRNA degradation (leading to ribosome degradation) during starvation. The chain is Ribonuclease PH from Methylorubrum extorquens (strain PA1) (Methylobacterium extorquens).